Reading from the N-terminus, the 472-residue chain is Tyrosine--tRNA ligase, mitochondrial (472 aa).

Tyrosine 72 contacts L-tyrosine. Residue aspartate 76 coordinates ATP. Residues 77–86 (PTGDSLHVGH) carry the 'HIGH' region motif. L-tyrosine contacts are provided by aspartate 116, tyrosine 216, glutamine 220, aspartate 223, and glutamine 242. ATP contacts are provided by isoleucine 269 and lysine 279. Positions 276 to 280 (KLGKS) match the 'KMSKS' region motif. N6-acetyllysine is present on residues lysine 350 and lysine 362.

It belongs to the class-I aminoacyl-tRNA synthetase family. In terms of assembly, homodimer.

It localises to the mitochondrion matrix. It catalyses the reaction tRNA(Tyr) + L-tyrosine + ATP = L-tyrosyl-tRNA(Tyr) + AMP + diphosphate + H(+). In terms of biological role, catalyzes the attachment of tyrosine to tRNA(Tyr) in a two-step reaction: tyrosine is first activated by ATP to form Tyr-AMP and then transferred to the acceptor end of tRNA(Tyr). This is Tyrosine--tRNA ligase, mitochondrial (Yars2) from Mus musculus (Mouse).